The sequence spans 126 residues: SGSCATKTCWRTLPPFRDIGFALKRKYHSAALVEPVRARRHRRPTFLKLVHVPGGGGYRKPSPTELVFLEQSPNYCESDAAAGSVGTQGRPCNRSSPLAGGCELLCCGRGYNTHIATQAWRCHCKF.

A lipid anchor (O-palmitoleoyl serine; by PORCN) is attached at Ser-1. Cys-92 and Cys-107 are joined by a disulfide. An N-linked (GlcNAc...) asparagine glycan is attached at Asn-93.

It belongs to the Wnt family. In terms of processing, palmitoleoylation is required for efficient binding to frizzled receptors. Depalmitoleoylation leads to Wnt signaling pathway inhibition.

It localises to the secreted. Its subcellular location is the extracellular space. It is found in the extracellular matrix. In terms of biological role, ligand for members of the frizzled family of seven transmembrane receptors. Probable developmental protein. May be a signaling molecule which affects the development of discrete regions of tissues. Is likely to signal over only few cell diameters. The sequence is that of Protein Wnt-7(II) (WNT-7(II)) from Eptatretus stoutii (Pacific hagfish).